The following is a 112-amino-acid chain: UPF0060 membrane protein Mpe_A1656 (112 aa).

4 helical membrane-spanning segments follow: residues 9–29 (GLFF…WLVL), 34–54 (SAWL…LLTL), 65–85 (AYGG…DGVV), and 91–111 (LVGG…PRAA).

This sequence belongs to the UPF0060 family.

It localises to the cell inner membrane. This is UPF0060 membrane protein Mpe_A1656 from Methylibium petroleiphilum (strain ATCC BAA-1232 / LMG 22953 / PM1).